We begin with the raw amino-acid sequence, 1101 residues long: Type VI secretion system component TssM1 (1101 aa).

A helical membrane pass occupies residues 371–391 (LTIGALSATALVVLAVTAVWI).

Its subcellular location is the cell inner membrane. Functionally, core component of the type VI (T6SS) secretion system that plays a role in the release of toxins targeting both eukaryotic and prokaryotic species. Plays an essential role in stabilization of assembled TssK1 structure at a fixed perimembrane site. In Pseudomonas aeruginosa (strain ATCC 15692 / DSM 22644 / CIP 104116 / JCM 14847 / LMG 12228 / 1C / PRS 101 / PAO1), this protein is Type VI secretion system component TssM1.